A 591-amino-acid chain; its full sequence is MTDKKNLRTPIVCVMGHVDHGKTTLLDKIRGTAIVSGEAGAITQHIGATEVPIDVIIDKLGDPRLRDRFMVPGLLFIDTPGHHAFTTLRSRGGALADLAIVVVDINEGFKPQTYESLQILKRFKTPFVVVANKIDRIGGWVSQKDMPFAATFKKQSSDVQARLETKLYEVIGELYNQGFAAERYDRVTNFQKTLGVVPVSAFTGEGIPDVLMVLLGLAQKFLEANLQYSAKGPGVGTVLEVKEEKGLGATLDIILYDGTLKKGDTVVIGSLGEPIRTKVRALLKPRELSEIRYESKFQQVSKVTAAAGVKISAPGLEGALAGSPIRVATEDNLEEIASQVKSEIDEVRIDTGSVGIMIKADTLGSLEALVHEFQKDEVPIRKAEVGDISHRDAVEASTVEDPLYSVIIGFNVKVHPDARDFLQESSVKVFTSDVIYRLVEDYQKYVKEQQEKAEKKIFETIIRPGKFKILPGCVFRQSKPAVVGVRVLGGVVRTNTDVMLENGNVVGKIKGLQSEGENIPSAKVGKEVAMAIEGATVGRQIKEEDVLYVNVPERHAKVLEHEIYESLSTDEKETLDIFLTLKRKDNPFWAK.

The tr-type G domain maps to 7–223; that stretch reads LRTPIVCVMG…LLGLAQKFLE (217 aa). Residues 16–23 form a G1 region; the sequence is GHVDHGKT. Position 16 to 23 (16 to 23) interacts with GTP; the sequence is GHVDHGKT. A G2 region spans residues 41–45; it reads AITQH. The segment at 78 to 81 is G3; sequence DTPG. Residues 78–82 and 132–135 each bind GTP; these read DTPGH and NKID. Residues 132-135 form a G4 region; sequence NKID. The tract at residues 200–202 is G5; that stretch reads SAF.

The protein belongs to the TRAFAC class translation factor GTPase superfamily. Classic translation factor GTPase family. IF-2 subfamily.

Its function is as follows. Function in general translation initiation by promoting the binding of the formylmethionine-tRNA to ribosomes. Seems to function along with eIF-2. In Methanosarcina mazei (strain ATCC BAA-159 / DSM 3647 / Goe1 / Go1 / JCM 11833 / OCM 88) (Methanosarcina frisia), this protein is Probable translation initiation factor IF-2.